Consider the following 109-residue polypeptide: U3-lycotoxin-Ls1x (109 aa).

The signal sequence occupies residues 1-20 (MKFVLLFGVLLVTLFSYSSA). The propeptide occupies 21 to 44 (EMLDDFDQADEDELLSLIEKEEAR). 4 cysteine pairs are disulfide-bonded: cysteine 48–cysteine 63, cysteine 55–cysteine 72, cysteine 62–cysteine 88, and cysteine 74–cysteine 86.

This sequence belongs to the neurotoxin 19 (CSTX) family. 01 subfamily. As to expression, expressed by the venom gland.

It is found in the secreted. The polypeptide is U3-lycotoxin-Ls1x (Lycosa singoriensis (Wolf spider)).